The sequence spans 90 residues: Small ribosomal subunit protein bS16 (90 aa).

The protein belongs to the bacterial ribosomal protein bS16 family.

In Bacillus pumilus (strain SAFR-032), this protein is Small ribosomal subunit protein bS16.